The following is a 104-amino-acid chain: Inner membrane protein YjeO (104 aa).

Residues 1–5 (MSARM) lie on the Cytoplasmic side of the membrane. The chain crosses the membrane as a helical span at residues 6–26 (FVLCCIWFIVAFLWITITSAL). The Periplasmic segment spans residues 27–52 (DKEWMIDGRGINNVCDVLMYLEEDDT). A helical transmembrane segment spans residues 53 to 73 (RDVGVIMTLPLFFPFLWFALW). Residues 74–77 (RKKR) are Cytoplasmic-facing. Residues 78 to 98 (GWFMYATALAIFGYWLWQFFL) traverse the membrane as a helical segment. Residues 99 to 104 (RYQFCL) lie on the Periplasmic side of the membrane.

It localises to the cell inner membrane. This is Inner membrane protein YjeO (yjeO) from Escherichia coli (strain K12).